The primary structure comprises 1018 residues: DNA polymerase gamma (1018 aa).

This sequence belongs to the DNA polymerase type-A family. Mg(2+) serves as cofactor.

The protein localises to the mitochondrion. It carries out the reaction DNA(n) + a 2'-deoxyribonucleoside 5'-triphosphate = DNA(n+1) + diphosphate. Functionally, involved in the replication of mitochondrial DNA. The polypeptide is DNA polymerase gamma (mip1) (Schizosaccharomyces pombe (strain 972 / ATCC 24843) (Fission yeast)).